Here is a 900-residue protein sequence, read N- to C-terminus: Translation initiation factor IF-2 (900 aa).

Residues 48-310 (HLNRDRGNAP…KPSSLQQSFN (263 aa)) form a disordered region. Polar residues predominate over residues 68-82 (STLNVPSTGGKSKSV). Basic and acidic residues-rich tracts occupy residues 85–98 (EVRK…RDPI) and 108–164 (QARR…KEKV). The span at 165–176 (TNQQNENMTKPA) shows a compositional bias: polar residues. Over residues 177–237 (QSEKAKREAE…SATKPEESAD (61 aa)) the composition is skewed to basic and acidic residues. Residues 263–277 (TRTRAAKVTKQKKGN) are compositionally biased toward basic residues. A compositionally biased stretch (basic and acidic residues) spans 278–291 (RQSESKADREEARA). Residues 399-568 (FRAPVVTIMG…LLQAEVLELK (170 aa)) form the tr-type G domain. Positions 408–415 (GHVDHGKT) are G1. Position 408-415 (408-415 (GHVDHGKT)) interacts with GTP. The interval 433-437 (GITQH) is G2. The G3 stretch occupies residues 454–457 (DTPG). GTP is bound by residues 454–458 (DTPGH) and 508–511 (NKID). Residues 508 to 511 (NKID) are G4. The tract at residues 544 to 546 (SAK) is G5.

It belongs to the TRAFAC class translation factor GTPase superfamily. Classic translation factor GTPase family. IF-2 subfamily.

Its subcellular location is the cytoplasm. Functionally, one of the essential components for the initiation of protein synthesis. Protects formylmethionyl-tRNA from spontaneous hydrolysis and promotes its binding to the 30S ribosomal subunits. Also involved in the hydrolysis of GTP during the formation of the 70S ribosomal complex. In Pectobacterium atrosepticum (strain SCRI 1043 / ATCC BAA-672) (Erwinia carotovora subsp. atroseptica), this protein is Translation initiation factor IF-2.